Here is a 230-residue protein sequence, read N- to C-terminus: Small ribosomal subunit protein uS3 (230 aa).

The region spanning 43 to 95 (VNRVIIYSARPKMISEERKAHLAKLLELKFGLEKPVIEVLPIENPNLDAHVIA) is the KH type-2 domain.

Belongs to the universal ribosomal protein uS3 family. As to quaternary structure, part of the 30S ribosomal subunit.

Functionally, binds the lower part of the 30S subunit head. In Nanoarchaeum equitans (strain Kin4-M), this protein is Small ribosomal subunit protein uS3.